We begin with the raw amino-acid sequence, 730 residues long: Aspyridones cluster regulator apdR (730 aa).

Residues 20 to 46 (CTECRRRKIRCDQATPCRHCEKAALRC) constitute a DNA-binding region (zn(2)-C6 fungal-type).

It is found in the nucleus. Functionally, transcription factor involved in regulation of gene cluster that mediates the biosynthesis of aspyridones. The polypeptide is Aspyridones cluster regulator apdR (Emericella nidulans (strain FGSC A4 / ATCC 38163 / CBS 112.46 / NRRL 194 / M139) (Aspergillus nidulans)).